A 348-amino-acid polypeptide reads, in one-letter code: UDP-glucose 4-epimerase (348 aa).

Thr125 provides a ligand contact to substrate. Tyr149 (proton acceptor) is an active-site residue.

This sequence belongs to the NAD(P)-dependent epimerase/dehydratase family. NAD(+) is required as a cofactor.

It catalyses the reaction UDP-alpha-D-glucose = UDP-alpha-D-galactose. The protein operates within carbohydrate metabolism; galactose metabolism. It participates in glycan metabolism; exopolysaccharide biosynthesis. The protein is UDP-glucose 4-epimerase (exoB) of Azospirillum brasilense.